Here is a 200-residue protein sequence, read N- to C-terminus: Guanylate kinase (200 aa).

Residues 4–183 form the Guanylate kinase-like domain; the sequence is GAVLIISGPS…AKEAMVAIAR (180 aa). Position 11–18 (11–18) interacts with ATP; that stretch reads GPSGCGKS.

The protein belongs to the guanylate kinase family.

It localises to the cytoplasm. It catalyses the reaction GMP + ATP = GDP + ADP. Functionally, essential for recycling GMP and indirectly, cGMP. The chain is Guanylate kinase from Helicobacter hepaticus (strain ATCC 51449 / 3B1).